A 420-amino-acid polypeptide reads, in one-letter code: Fasciclin-like arabinogalactan protein 8 (420 aa).

An N-terminal signal peptide occupies residues 1 to 25; it reads MAASQTFSLLAFTFSLLAFASTVSS. 2 consecutive FAS1 domains span residues 26–172 and 186–326; these read HNIT…DAPI and SLSN…DNVL. Residues Asn-27, Asn-128, Asn-162, Asn-189, and Asn-273 are each glycosylated (N-linked (GlcNAc...) asparagine). The disordered stretch occupies residues 335–394; it reads SKSPSPAPAPEPVTAPTPSPADAPSPTAASPPAPPTDESPESAPSDSPTGSANSKSANAA. Residues 339–371 show a composition bias toward pro residues; the sequence is SPAPAPEPVTAPTPSPADAPSPTAASPPAPPTD. Residue Asn-392 is the site of GPI-anchor amidated asparagine attachment. A propeptide spans 393 to 420 (removed in mature form); the sequence is AAVGVSTPSLFTALVTIAAIAVSVSLCS.

It belongs to the fasciclin-like AGP family. As to expression, expressed mainly in flowers and to a lesser extent in leaves and roots.

It is found in the cell membrane. Functionally, may be a cell surface adhesion protein. The polypeptide is Fasciclin-like arabinogalactan protein 8 (FLA8) (Arabidopsis thaliana (Mouse-ear cress)).